Reading from the N-terminus, the 156-residue chain is MPRKGPAPKRPVIIDPVYGSPLVTSLINKVLLNGKRSTAERIVYGAMEGLREKTGNDPIITLKRALENIKPTLEVKSRRVGGATYQVPIEVKPGRANTLALRWLVGYSRARREKTMTERLLNELLDASNGLGAAVKKREDTHKMAESNKAFAHYRW.

This sequence belongs to the universal ribosomal protein uS7 family. As to quaternary structure, part of the 30S ribosomal subunit. Contacts proteins S9 and S11.

Functionally, one of the primary rRNA binding proteins, it binds directly to 16S rRNA where it nucleates assembly of the head domain of the 30S subunit. Is located at the subunit interface close to the decoding center, probably blocks exit of the E-site tRNA. This Streptomyces avermitilis (strain ATCC 31267 / DSM 46492 / JCM 5070 / NBRC 14893 / NCIMB 12804 / NRRL 8165 / MA-4680) protein is Small ribosomal subunit protein uS7.